The primary structure comprises 448 residues: JmjC domain-containing protein D (448 aa).

The JmjC domain maps to 305–448; sequence EQIPQLRNDI…SLSQSFSIFP (144 aa).

The polypeptide is JmjC domain-containing protein D (jcdD) (Dictyostelium discoideum (Social amoeba)).